A 150-amino-acid polypeptide reads, in one-letter code: Profilin (150 aa).

The protein belongs to the profilin family. Occurs in many kinds of cells as a complex with monomeric actin in a 1:1 ratio.

It localises to the cytoplasm. It is found in the cytoskeleton. Functionally, binds to actin and affects the structure of the cytoskeleton. At high concentrations, profilin prevents the polymerization of actin, whereas it enhances it at low concentrations. By binding to PIP2, it inhibits the formation of IP3 and DG. The chain is Profilin from Trypanosoma brucei brucei.